A 266-amino-acid chain; its full sequence is Indole-3-glycerol phosphate synthase (266 aa).

This sequence belongs to the TrpC family.

The catalysed reaction is 1-(2-carboxyphenylamino)-1-deoxy-D-ribulose 5-phosphate + H(+) = (1S,2R)-1-C-(indol-3-yl)glycerol 3-phosphate + CO2 + H2O. Its pathway is amino-acid biosynthesis; L-tryptophan biosynthesis; L-tryptophan from chorismate: step 4/5. The sequence is that of Indole-3-glycerol phosphate synthase from Paracidovorax citrulli (strain AAC00-1) (Acidovorax citrulli).